The sequence spans 488 residues: Patatin-like protein 7 (488 aa).

A disordered region spans residues 23–49 (QRGGDGATAASKSANDYNNNDSLLTDM). Residues 32 to 47 (ASKSANDYNNNDSLLT) are compositionally biased toward polar residues. In terms of domain architecture, PNPLA spans 101–301 (LSIDGGGMRG…AMSNPTAAAI (201 aa)). The GXGXXG motif lies at 105–110 (GGGMRG). Ser145 serves as the catalytic Nucleophile.

Belongs to the patatin family. As to expression, highly expressed in roots and at lower levels in leaves, stems, flowers and siliques.

It is found in the cell membrane. Possesses non-specific lipolytic acyl hydrolase (LAH) activity. Catalyzes the hydrolysis of the galactolipids monogalactosyldiacylglycerol (MGDG) and digalactosyldiacylglycerol (DGDG), and the phoshpolipids phosphatidylcholine (PC), phosphatidylethanolamine (PE), phosphatidylglycerol (PG), phosphatidic acid (PA), phosphatidylserine (PS). Favors the release of fatty acid at the sn-2 position for PC. Possesses acyl-CoA thioesterase activity. Negatively affects disease resistance to the necrotic fungal pathogen Botrytis cinerea and the avirulent bacteria Pseudomonas syringae by promoting cell death and reducing the efficiency of the hypersensitive response, respectively. However, PLP2 contributes to resistance to cucumber mosaic virus (CMV), an obligate parasite inducing hypersensitive response. May negatively regulate oxylipin production, possibly via participating in membrane repair that includes removal of oxidatively modified lipids. Enzymatic products of PLP2 may influence cellulose content and cell elongation. This chain is Patatin-like protein 7 (PLP7), found in Arabidopsis thaliana (Mouse-ear cress).